We begin with the raw amino-acid sequence, 872 residues long: Facilitated trehalose transporter Tret1 (872 aa).

Disordered regions lie at residues 1-40 (MSGR…LKEK), 53-217 (VESN…KATS), 262-281 (SSSE…RKHQ), and 293-315 (KVLQ…KRLI). The Cytoplasmic portion of the chain corresponds to 1-406 (MSGRDNRGAG…VYRPTTNPIY (406 aa)). The span at 8-22 (GAGGGGGGGGGGSGG) shows a compositional bias: gly residues. Composition is skewed to low complexity over residues 55-68 (SNLS…SLDT), 84-98 (RHPQ…QQQR), and 121-132 (PPTQQQPQQQHQ). Phosphoserine is present on residues Ser262, Ser263, and Ser264. Residues Ser334 and Ser336 each carry the phosphoserine modification. Positions 340–361 (FLTSRQHFQQQRSISTDSRKSR) are disordered. The segment covering 344–355 (RQHFQQQRSIST) has biased composition (polar residues). Residues 407–427 (IWTQVLAALSVSLGSLVVGFV) traverse the membrane as a helical segment. Over 428-454 (SAYTSPALITMTNGNITSFEVTPQAAS) the chain is Extracellular. Residue Asn442 is glycosylated (N-linked (GlcNAc...) asparagine). Residues 455–475 (WVGGIMPLAGLLGGIAGGPFI) form a helical membrane-spanning segment. Topologically, residues 476 to 488 (EYLGRRNTILTTA) are cytoplasmic. A helical transmembrane segment spans residues 489–509 (VPFIVSSLLIACAVNITMVLL). Topologically, residues 510-511 (GR) are extracellular. Residues 512–532 (FLAGFCVGIASLSLPVYLGET) traverse the membrane as a helical segment. Over 533-538 (VQPEVR) the chain is Cytoplasmic. The helical transmembrane segment at 539–559 (GTLGLLPTAFGNIGILLCFVA) threads the bilayer. Residues 560–566 (GTYMDWS) lie on the Extracellular side of the membrane. The chain crosses the membrane as a helical span at residues 567 to 587 (MLAFLGAALPVPFLILMFLIP). Over 588–650 (ETPRWYVSRG…ELLKRNNLKP (63 aa)) the chain is Cytoplasmic. Residues 651 to 671 (LSISLGLMFFQQLSGINAVIF) form a helical membrane-spanning segment. At 672–687 (YTVQIFKDAGSTIDGN) the chain is on the extracellular side. The chain crosses the membrane as a helical span at residues 688–708 (VCTIIVGIVNFMATFIGIILI). At 709–714 (DRAGRK) the chain is on the cytoplasmic side. Residues 715 to 735 (ILLYVSNVAMIITLFVLGGFF) form a helical membrane-spanning segment. At 736–755 (YCKDKAGIDVSNVGWLPLSC) the chain is on the extracellular side. Residues 756 to 776 (FVVYILGFSLGFGPIPWLMMG) traverse the membrane as a helical segment. At 777 to 784 (EILPAKIR) the chain is on the cytoplasmic side. Residues 785–803 (GSAASVATAFNWTCTFVVT) traverse the membrane as a helical segment. The Extracellular segment spans residues 804–816 (KTFQDMLDVIGSY). Residues 817–837 (GAFWLFGAICFIGLFFVIIYV) traverse the membrane as a helical segment. At 838–872 (PETQGKTLEDIERKMMGRVRRMSSVANIKPLSFNM) the chain is on the cytoplasmic side. Ser860 and Ser861 each carry phosphoserine.

It belongs to the major facilitator superfamily. Sugar transporter (TC 2.A.1.1) family. Trehalose transporter subfamily.

The protein resides in the cell membrane. In terms of biological role, low-capacity facilitative transporter for trehalose. Does not transport maltose, sucrose or lactose. Mediates the bidirectional transfer of trehalose. Responsible for the transport of trehalose synthesized in the fat body and the incorporation of trehalose into other tissues that require a carbon source, thereby regulating trehalose levels in the hemolymph. The sequence is that of Facilitated trehalose transporter Tret1 from Drosophila willistoni (Fruit fly).